The following is a 663-amino-acid chain: Transketolase 2 (663 aa).

A substrate-binding site is contributed by His-25. Thiamine diphosphate is bound by residues His-65 and Gly-113–Leu-115. Asp-154 contributes to the Mg(2+) binding site. Thiamine diphosphate-binding residues include Gly-155 and Asn-184. Positions 184 and 186 each coordinate Mg(2+). 3 residues coordinate substrate: His-259, Arg-356, and Ser-383. His-259 is a binding site for thiamine diphosphate. Glu-410 (proton donor) is an active-site residue. Phe-436 contributes to the thiamine diphosphate binding site. Substrate is bound by residues His-460, Asp-468, and Arg-519.

Belongs to the transketolase family. As to quaternary structure, homodimer. It depends on Mg(2+) as a cofactor. Requires Ca(2+) as cofactor. Mn(2+) serves as cofactor. Co(2+) is required as a cofactor. The cofactor is thiamine diphosphate.

The enzyme catalyses D-sedoheptulose 7-phosphate + D-glyceraldehyde 3-phosphate = aldehydo-D-ribose 5-phosphate + D-xylulose 5-phosphate. Its function is as follows. Catalyzes the transfer of a two-carbon ketol group from a ketose donor to an aldose acceptor, via a covalent intermediate with the cofactor thiamine pyrophosphate. This is Transketolase 2 (tkt2) from Vibrio parahaemolyticus serotype O3:K6 (strain RIMD 2210633).